The primary structure comprises 302 residues: Putative beta-glucosidase 17 (302 aa).

The N-terminal stretch at 1-27 (MMAVAAATRIAVVVVAALAALAPGARG) is a signal peptide. A beta-D-glucoside is bound by residues Gln-47, His-149, and 194 to 195 (NE). Glu-195 acts as the Proton donor in catalysis. An intrachain disulfide couples Cys-214 to Cys-221. N-linked (GlcNAc...) asparagine glycosylation occurs at Asn-274.

Belongs to the glycosyl hydrolase 1 family.

The catalysed reaction is Hydrolysis of terminal, non-reducing beta-D-glucosyl residues with release of beta-D-glucose.. In Oryza sativa subsp. japonica (Rice), this protein is Putative beta-glucosidase 17 (BGLU17).